The primary structure comprises 447 residues: GTPase Der (447 aa).

EngA-type G domains are found at residues 4-165 and 180-357; these read KIIA…PEEE and LQIV…KIWN. Residues 10–17, 57–61, 119–122, 186–193, 233–237, and 298–301 contribute to the GTP site; these read GRPNVGKS, DTPGL, NKCE, GRPNAGKS, DTAGL, and NKWD. Positions 358–443 constitute a KH-like domain; it reads KKIATSKLNE…PIRFTYVKTK (86 aa).

This sequence belongs to the TRAFAC class TrmE-Era-EngA-EngB-Septin-like GTPase superfamily. EngA (Der) GTPase family. As to quaternary structure, associates with the 50S ribosomal subunit.

Its function is as follows. GTPase that plays an essential role in the late steps of ribosome biogenesis. This Rickettsia akari (strain Hartford) protein is GTPase Der.